A 435-amino-acid chain; its full sequence is Adenylosuccinate synthetase (435 aa).

GTP is bound by residues 13-19 (GDEGKGK) and 41-43 (GHT). The active-site Proton acceptor is the D14. Residues D14 and G41 each contribute to the Mg(2+) site. IMP contacts are provided by residues 14 to 17 (DEGK), 39 to 42 (NAGH), T131, R145, Q226, T241, and R309. The Proton donor role is filled by H42. 305–311 (TVTGRKR) is a binding site for substrate. GTP is bound by residues R311, 337–339 (KLD), and 419–421 (STG).

It belongs to the adenylosuccinate synthetase family. Homodimer. It depends on Mg(2+) as a cofactor.

It is found in the cytoplasm. The catalysed reaction is IMP + L-aspartate + GTP = N(6)-(1,2-dicarboxyethyl)-AMP + GDP + phosphate + 2 H(+). It participates in purine metabolism; AMP biosynthesis via de novo pathway; AMP from IMP: step 1/2. Its function is as follows. Plays an important role in the de novo pathway of purine nucleotide biosynthesis. Catalyzes the first committed step in the biosynthesis of AMP from IMP. In Dechloromonas aromatica (strain RCB), this protein is Adenylosuccinate synthetase.